A 349-amino-acid chain; its full sequence is Glucose 1-dehydrogenase 1 (349 aa).

Cys-39 is a binding site for Zn(2+). Thr-41 contributes to the substrate binding site. His-64 and Glu-65 together coordinate Zn(2+). Substrate contacts are provided by Glu-110 and Glu-146. Zn(2+) is bound at residue Glu-146. NADP(+) is bound by residues 178–181 (AGPI), 260–262 (LGV), and 289–291 (SVN). Asn-291 is a binding site for substrate.

This sequence belongs to the zinc-containing alcohol dehydrogenase family. Glucose 1-dehydrogenase subfamily. The cofactor is Zn(2+).

The catalysed reaction is D-glucose + NAD(+) = D-glucono-1,5-lactone + NADH + H(+). It catalyses the reaction D-glucose + NADP(+) = D-glucono-1,5-lactone + NADPH + H(+). Functionally, catalyzes the NAD(P)(+)-dependent oxidation of D-glucose to D-gluconate via gluconolactone. Can utilize both NAD(+) and NADP(+) as electron acceptor. Is involved in the degradation of glucose through a non-phosphorylative variant of the Entner-Doudoroff pathway. The protein is Glucose 1-dehydrogenase 1 of Caldivirga maquilingensis (strain ATCC 700844 / DSM 13496 / JCM 10307 / IC-167).